We begin with the raw amino-acid sequence, 829 residues long: Disintegrin and metalloproteinase domain-containing protein 23 (829 aa).

A signal peptide spans 1-55 (MKPPGSISRRPTLTGCSLPGASCGPGRCPAGPVPARAPPCRLLLVLLLLPALATS). Positions 56-283 (SRPRARGAAA…ELQWLRRRKR (228 aa)) are excised as a propeptide. N-linked (GlcNAc...) asparagine glycosylation is found at Asn-72, Asn-92, Asn-97, and Asn-260. Topologically, residues 284 to 789 (AVNPSRGVFE…EGPKGPSATN (506 aa)) are extracellular. Residues 296-493 (KYLELMIVND…GGGACLFNRP (198 aa)) form the Peptidase M12B domain. 3 disulfide bridges follow: Cys-405–Cys-488, Cys-447–Cys-472, and Cys-449–Cys-456. Residues 499-585 (PTECGNGYVE…QCPPNLHKQD (87 aa)) form the Disintegrin domain. Asn-544 and Asn-545 each carry an N-linked (GlcNAc...) asparagine glycan. The cysteines at positions 557 and 577 are disulfide-linked. 2 N-linked (GlcNAc...) asparagine glycosylation sites follow: Asn-661 and Asn-729. The 38-residue stretch at 729–766 (NMSSCPLDSRGKVCSGHGVCSNEATCICDFTWAGTDCS) folds into the EGF-like domain. Cystine bridges form between Cys-733–Cys-748, Cys-742–Cys-754, and Cys-756–Cys-765. Residues 790-810 (LIIGSIAGAILVAAIVLGGTG) traverse the membrane as a helical segment. At 811 to 829 (WGFKNVKKRRFDPTQQGPI) the chain is on the cytoplasmic side.

Can bind to LGI1 and LGI4. Brain specific.

Its subcellular location is the cell membrane. It localises to the secreted. In terms of biological role, may play a role in cell-cell and cell-matrix interactions. This is a non-catalytic metalloprotease-like protein. This is Disintegrin and metalloproteinase domain-containing protein 23 (Adam23) from Mus musculus (Mouse).